The following is a 2122-amino-acid chain: Unique GC organizer UGO (2122 aa).

5 helical membrane passes run 19–39 (FAVAVALLDLALYVLIGTNSL), 50–70 (LFGMITSALIFIIALCGFVIV), 82–102 (TYIMPVLIICNIASVFYMQLI), 115–135 (VLTFLITGYPYVWLVAFVLIG), and 145–165 (VVCSVSLGSSCPPSVWVDVGL). Disordered stretches follow at residues 337 to 403 (AALH…HRSA), 422 to 532 (FRGL…GPFV), 565 to 591 (DLRESRERTARAASHDTHAAADDSGLQ), 627 to 762 (HRRG…GRAN), 785 to 815 (HAASSEEERPVRPARHSWRRGSGDSRECSAS), 848 to 870 (MSRRRRREGKSRPHASSVSRAER), 903 to 949 (SKEG…ASAN), 999 to 1046 (RNET…LHSR), 1068 to 1308 (PSDL…HEAV), 1328 to 1368 (AGLS…SEEE), 1515 to 1540 (ANSSTAVSSSLPDSTAWQGSGAAASA), 1560 to 1608 (AAEH…TPHT), and 1639 to 1727 (QGLG…TFFG). Residues 363-374 (RSNTLRGCSGQV) are compositionally biased toward polar residues. 3 stretches are compositionally biased toward basic and acidic residues: residues 503 to 525 (LRMDEQSGDADKASSDVSRDPAK), 565 to 585 (DLRESRERTARAASHDTHAAA), and 632 to 645 (GARDGELVFERGEP). Residues 672–687 (RLSRSRRHKTRTYRRG) are compositionally biased toward basic residues. The segment covering 690–699 (SDGTTAGTSD) has biased composition (low complexity). Residues 707-720 (LEDEGSDSGQESES) are compositionally biased toward acidic residues. Over residues 725-735 (RRRMRSSRNRR) the composition is skewed to basic residues. The segment covering 741–750 (EDSSSGTSVR) has biased composition (low complexity). Positions 751–760 (SEGRHCREGR) are enriched in basic and acidic residues. N762 is a glycosylation site (N-linked (GlcNAc...) asparagine). A compositionally biased stretch (basic residues) spans 848–860 (MSRRRRREGKSRP). Composition is skewed to polar residues over residues 999–1011 (RNETEMTASSPAT) and 1072–1097 (SLFTTPPASPSSLNEVQASRSSSARI). Residue N1000 is glycosylated (N-linked (GlcNAc...) asparagine). N1165 carries an N-linked (GlcNAc...) asparagine glycan. Over residues 1220-1261 (SREDLVGEADSHVSPEKEVFVSSRREKREEQVPRSRREERRD) the composition is skewed to basic and acidic residues. Residues 1262–1276 (RRGRRWRRGRRRRKA) show a composition bias toward basic residues. 2 stretches are compositionally biased toward basic and acidic residues: residues 1277–1289 (RECSETEERRDSS) and 1345–1359 (GDMRERQIYETHSDG). Residues 1515–1527 (ANSSTAVSSSLPD) are compositionally biased toward polar residues. Residue N1516 is glycosylated (N-linked (GlcNAc...) asparagine). Composition is skewed to low complexity over residues 1528 to 1540 (STAWQGSGAAASA) and 1597 to 1608 (TQTPQTPQTPHT). A compositionally biased stretch (polar residues) spans 1684 to 1693 (LSATPSTRLQ). The next 5 helical transmembrane spans lie at 1859-1879 (VAWLLFLICFYATAFHGLLRL), 1956-1976 (MLALSFLQFVYAVFDNTWHLI), 1989-2009 (IIPASPSLEIAAVQTVYILAV), 2017-2037 (IFLLYIITYIIIFFVALPPGV), and 2040-2060 (VQLFTISMAGWLFTCVGGQLF). Residues 2102-2122 (DEGSEDEVSMGSGHLVGDRSA) form a disordered region.

As to quaternary structure, interacts with guanylate cyclase GC; the interaction regulates guanylate cyclase GC trafficking and catalytic activity.

The protein localises to the cell membrane. In terms of biological role, in tachyzoites, required for the cellular trafficking of guanylate cyclase GC to the cell membrane and for GC guanylate cyclase activity. The sequence is that of Unique GC organizer UGO from Toxoplasma gondii (strain ATCC 50853 / GT1).